Here is a 1498-residue protein sequence, read N- to C-terminus: MNRGRSMATPGEQCAGLRVWNQTEQEPAAYHLLSLCFVRAASSWVPPMYLWVLGPIYLLYIHRHGRCYLRMSHLFKTKMVLGLALILLYTFNVAVPLWRIHQGVPQAPELLIHPTVWLTTMSFATFLIHMERRKGVRSSGVLFGYWLLCCILPGINTVQQASAGNFRQEPLHHLATYLCLSLVVAELVLSCLVDQPPFFSEDSQPLNPCPEAEASFPSKAMFWWASGLLWRGYKKLLGPKDLWSLGRENSSEELVSQLEREWRRSCNGLPGHKGHSSVGAPETEAFLQPERSQRGPLLRAIWRVFRSTFLLGTLSLVISDAFRFAVPKLLSLFLEFMGDRNSSAWTGWLLAVLMFAAACLQTLFEQQHMYRAKVLQMRLRTAITGLVYRKVLVLSSGSRKSSAAGDVVNLVSVDIQRLAESIIYLNGLWLLFLWIFVCFVYLWQLLGPSALTAVAVFLSLLPLNFFITKKRGFHQEEQMRQKASRARLTSSMLRTVRTIKSHGWEHAFLERLLHIRGQELSALKTSTLLFSVSLVSFQVSTFLVALVVFAVHTLVAEDNAMDAEKAFVTLTVLSILNKAQAFLPFSVHCIVQARVSFDRLAAFLCLEEVDPNGMIASNSRRSSKDRISVHNGTFAWSQESPPCLHGINLTVPQGCLLAVVGPVGAGKSSLLSALLGELLKVEGSVSIEGSVAYVPQEAWVQNTSVVENVCFRQELDLPWLQKVLDACALGSDVASFPAGVHTPIGEQGMNLSGGQKQRLSLARAVYKKAAIYLLDDPLAALDAHVSQQVFKQVIGPSGLLQGTTRILVTHTLHVLPQADRILVLANGTIAEMGSYQDLLQRNGALVGLLDGARQPAGTHDAATSDDLGGFPGGGRPTCRPDRPRPTEAAPVKGRSTSEVQMEASLDDPEATGLTAEEDSVRYGRVKTTIYLSYLRAVGTPLCTYTLFLFLCQQVASFSQGYWLSLWADDPVVDGRQMHAALRGWVFGLLGCLQAIGLFASMAAVFLGGARASGLLFRSLLWDVARSPIGFFERTPVGNLLNRFSKETDTVDVDIPDKLRSLLTYAFGLLEVGLAVTMATPLAIVAILPLMVLYAGFQSLYVATSCQLRRLESARYSSVCSHMAETFQGSLVVRAFRAQASFTAQHDALMDENQRVSFPKLVADRWLATNLELLGNGLVFVAATCAVLSKAHLSAGLVGFSVSAALQVTQTLQWVVRSWTDLENSMVAVERVQDYARIPKEAPWRLPTCAAQPLWPCGGQIEFRDFGLRHRPELPLAVQGVSLKIHAGEKVGIVGRTGAGKSSLAWGLLRLQEAAEGNIWIDGVPITHVGLHTLRSRITIIPQDPVLFPGSLRMNLDLLQEHTDEGIWAALETVQLKAFVTSLPGQLQYECAGQGDDLSVGQKQLLCLARALLRKTQILILDEATASVDPGTEMQMQAALERWFTQCTVLLIAHRLRSVMDCARVLVMDEGQVAESGSPAQLLAQKGLFYRLAHESGLA.

Residues 1–37 lie on the Extracellular side of the membrane; it reads MNRGRSMATPGEQCAGLRVWNQTEQEPAAYHLLSLCF. Asn-21 carries an N-linked (GlcNAc...) asparagine glycan. The helical transmembrane segment at 38-58 threads the bilayer; sequence VRAASSWVPPMYLWVLGPIYL. The Cytoplasmic segment spans residues 59–78; the sequence is LYIHRHGRCYLRMSHLFKTK. Residues 79 to 99 traverse the membrane as a helical segment; it reads MVLGLALILLYTFNVAVPLWR. Topologically, residues 100-104 are extracellular; that stretch reads IHQGV. Residues 105–125 traverse the membrane as a helical segment; it reads PQAPELLIHPTVWLTTMSFAT. The Cytoplasmic portion of the chain corresponds to 126 to 137; sequence FLIHMERRKGVR. A helical transmembrane segment spans residues 138-155; it reads SSGVLFGYWLLCCILPGI. At 156 to 173 the chain is on the extracellular side; the sequence is NTVQQASAGNFRQEPLHH. A helical membrane pass occupies residues 174–194; it reads LATYLCLSLVVAELVLSCLVD. The Cytoplasmic portion of the chain corresponds to 195-300; the sequence is QPPFFSEDSQ…RSQRGPLLRA (106 aa). The chain crosses the membrane as a helical span at residues 301–321; it reads IWRVFRSTFLLGTLSLVISDA. In terms of domain architecture, ABC transmembrane type-1 1 spans 309–592; that stretch reads FLLGTLSLVI…LPFSVHCIVQ (284 aa). The Extracellular portion of the chain corresponds to 322-347; the sequence is FRFAVPKLLSLFLEFMGDRNSSAWTG. N-linked (GlcNAc...) asparagine glycosylation is present at Asn-341. The chain crosses the membrane as a helical span at residues 348 to 368; it reads WLLAVLMFAAACLQTLFEQQH. Over 369–424 the chain is Cytoplasmic; it reads MYRAKVLQMRLRTAITGLVYRKVLVLSSGSRKSSAAGDVVNLVSVDIQRLAESIIY. The chain crosses the membrane as a helical span at residues 425-445; that stretch reads LNGLWLLFLWIFVCFVYLWQL. The Extracellular portion of the chain corresponds to 446 to 448; that stretch reads LGP. Residues 449 to 469 form a helical membrane-spanning segment; that stretch reads SALTAVAVFLSLLPLNFFITK. The Cytoplasmic portion of the chain corresponds to 470–531; that stretch reads KRGFHQEEQM…ALKTSTLLFS (62 aa). A helical transmembrane segment spans residues 532–552; that stretch reads VSLVSFQVSTFLVALVVFAVH. Over 553-574 the chain is Extracellular; that stretch reads TLVAEDNAMDAEKAFVTLTVLS. Residues 575–595 traverse the membrane as a helical segment; it reads ILNKAQAFLPFSVHCIVQARV. Residues 596-934 lie on the Cytoplasmic side of the membrane; sequence SFDRLAAFLC…VKTTIYLSYL (339 aa). Residues 627-851 form the ABC transporter 1 domain; sequence ISVHNGTFAW…NGALVGLLDG (225 aa). Position 661–668 (661–668) interacts with ATP; it reads GPVGAGKS. The segment at 855-910 is disordered; it reads PAGTHDAATSDDLGGFPGGGRPTCRPDRPRPTEAAPVKGRSTSEVQMEASLDDPEA. The helical transmembrane segment at 935–955 threads the bilayer; the sequence is RAVGTPLCTYTLFLFLCQQVA. In terms of domain architecture, ABC transmembrane type-1 2 spans 942–1223; the sequence is CTYTLFLFLC…VVRSWTDLEN (282 aa). Residues 956-992 lie on the Extracellular side of the membrane; that stretch reads SFSQGYWLSLWADDPVVDGRQMHAALRGWVFGLLGCL. The helical transmembrane segment at 993–1013 threads the bilayer; sequence QAIGLFASMAAVFLGGARASG. Residues 1014–1056 are Cytoplasmic-facing; it reads LLFRSLLWDVARSPIGFFERTPVGNLLNRFSKETDTVDVDIPD. A helical transmembrane segment spans residues 1057–1077; the sequence is KLRSLLTYAFGLLEVGLAVTM. Residue Ala-1078 is a topological domain, extracellular. A helical transmembrane segment spans residues 1079 to 1099; it reads TPLAIVAILPLMVLYAGFQSL. Over 1100–1170 the chain is Cytoplasmic; the sequence is YVATSCQLRR…VADRWLATNL (71 aa). The helical transmembrane segment at 1171 to 1191 threads the bilayer; the sequence is ELLGNGLVFVAATCAVLSKAH. Topologically, residues 1192-1193 are extracellular; the sequence is LS. The chain crosses the membrane as a helical span at residues 1194–1214; that stretch reads AGLVGFSVSAALQVTQTLQWV. Over 1215–1498 the chain is Cytoplasmic; that stretch reads VRSWTDLENS…YRLAHESGLA (284 aa). One can recognise an ABC transporter 2 domain in the interval 1260-1494; it reads IEFRDFGLRH…KGLFYRLAHE (235 aa). A Phosphoserine modification is found at Ser-1281. 1294–1301 is a binding site for ATP; that stretch reads GRTGAGKS.

Belongs to the ABC transporter superfamily. ABCC family. Conjugate transporter (TC 3.A.1.208) subfamily. In terms of processing, glycosylated.

It localises to the basolateral cell membrane. The protein resides in the basal cell membrane. The catalysed reaction is an S-substituted glutathione(in) + ATP + H2O = an S-substituted glutathione(out) + ADP + phosphate + H(+). It catalyses the reaction leukotriene C4(in) + ATP + H2O = leukotriene C4(out) + ADP + phosphate + H(+). In terms of biological role, ATP-dependent transporter of the ATP-binding cassette (ABC) family that actively extrudes physiological compounds, and xenobiotics from cells. Mediates ATP-dependent transport of glutathione conjugates such as leukotriene-c4 (LTC4) and N-ethylmaleimide S-glutathione (NEM-GS) (in vitro), and an anionic cyclopentapeptide endothelin antagonist, BQ-123. May contribute to regulate the transport of organic compounds in testes across the blood-testis-barrier. Its function is as follows. Mediates the release of nucleoside triphosphates, predominantly ATP, into the circulation, where it is rapidly converted into AMP and the mineralization inhibitor inorganic pyrophosphate (PPi) by the ecto-enzyme ectonucleotide pyrophosphatase phosphodiesterase 1 (ENPP1), therefore playing a role in PPi homeostasis. This chain is ATP-binding cassette sub-family C member 6 (Abcc6), found in Mus musculus (Mouse).